We begin with the raw amino-acid sequence, 1414 residues long: DNA-directed RNA polymerase subunit beta' (1414 aa).

Cysteine 70, cysteine 72, cysteine 85, and cysteine 88 together coordinate Zn(2+). Aspartate 460, aspartate 462, and aspartate 464 together coordinate Mg(2+). Residues cysteine 815, cysteine 889, cysteine 896, and cysteine 899 each coordinate Zn(2+). The interval 1395–1414 (EAEAQFADISSTPDSDTDAS) is disordered.

It belongs to the RNA polymerase beta' chain family. The RNAP catalytic core consists of 2 alpha, 1 beta, 1 beta' and 1 omega subunit. When a sigma factor is associated with the core the holoenzyme is formed, which can initiate transcription. Mg(2+) serves as cofactor. It depends on Zn(2+) as a cofactor.

The catalysed reaction is RNA(n) + a ribonucleoside 5'-triphosphate = RNA(n+1) + diphosphate. DNA-dependent RNA polymerase catalyzes the transcription of DNA into RNA using the four ribonucleoside triphosphates as substrates. The chain is DNA-directed RNA polymerase subunit beta' from Herminiimonas arsenicoxydans.